A 372-amino-acid chain; its full sequence is GTPase Obg (372 aa).

In terms of domain architecture, Obg spans 1-159 (MKFVDEATIE…RRLRLELKVL (159 aa)). The 177-residue stretch at 160–336 (ADVGLLGLPN…LIWALQDYLD (177 aa)) folds into the OBG-type G domain. GTP-binding positions include 166–173 (GLPNAGKS), 191–195 (FTTLH), 213–216 (DIPG), 288–291 (NKLD), and 317–319 (SGL). The Mg(2+) site is built by Ser-173 and Thr-193. Residues 341–372 (KEQITQDKADGSYVHEDPRFDTTRDAPPSGKD) form a disordered region.

This sequence belongs to the TRAFAC class OBG-HflX-like GTPase superfamily. OBG GTPase family. In terms of assembly, monomer. Requires Mg(2+) as cofactor.

The protein localises to the cytoplasm. In terms of biological role, an essential GTPase which binds GTP, GDP and possibly (p)ppGpp with moderate affinity, with high nucleotide exchange rates and a fairly low GTP hydrolysis rate. Plays a role in control of the cell cycle, stress response, ribosome biogenesis and in those bacteria that undergo differentiation, in morphogenesis control. The sequence is that of GTPase Obg from Bordetella avium (strain 197N).